Consider the following 385-residue polypeptide: DNA replication and repair protein RecF (385 aa).

Gly30 to Thr37 contributes to the ATP binding site.

The protein belongs to the RecF family.

Its subcellular location is the cytoplasm. The RecF protein is involved in DNA metabolism; it is required for DNA replication and normal SOS inducibility. RecF binds preferentially to single-stranded, linear DNA. It also seems to bind ATP. This Herpetosiphon aurantiacus (strain ATCC 23779 / DSM 785 / 114-95) protein is DNA replication and repair protein RecF.